The sequence spans 338 residues: L-serine dehydratase (338 aa).

Residue Lys-39 is modified to N6-(pyridoxal phosphate)lysine.

Belongs to the serine/threonine dehydratase family. Requires pyridoxal 5'-phosphate as cofactor.

The protein resides in the cytoplasm. It catalyses the reaction L-serine = pyruvate + NH4(+). The protein operates within carbohydrate biosynthesis; gluconeogenesis. The sequence is that of L-serine dehydratase (SDL1) from Saccharomyces cerevisiae (strain AWRI1631) (Baker's yeast).